We begin with the raw amino-acid sequence, 466 residues long: Acetylornithine aminotransferase, mitochondrial (466 aa).

N6-(pyridoxal phosphate)lysine is present on lysine 308.

This sequence belongs to the class-III pyridoxal-phosphate-dependent aminotransferase family. It depends on pyridoxal 5'-phosphate as a cofactor.

The protein localises to the mitochondrion matrix. The catalysed reaction is N(2)-acetyl-L-ornithine + 2-oxoglutarate = N-acetyl-L-glutamate 5-semialdehyde + L-glutamate. It functions in the pathway amino-acid biosynthesis; L-arginine biosynthesis; N(2)-acetyl-L-ornithine from L-glutamate: step 4/4. The protein is Acetylornithine aminotransferase, mitochondrial (ARG8) of Debaryomyces hansenii (strain ATCC 36239 / CBS 767 / BCRC 21394 / JCM 1990 / NBRC 0083 / IGC 2968) (Yeast).